The sequence spans 877 residues: Leucine--tRNA ligase (877 aa).

Residues 43–53 carry the 'HIGH' region motif; the sequence is PYPSGRIHMGH. A 'KMSKS' region motif is present at residues 628–632; the sequence is KMSKS. Lysine 631 contributes to the ATP binding site.

It belongs to the class-I aminoacyl-tRNA synthetase family.

It localises to the cytoplasm. It carries out the reaction tRNA(Leu) + L-leucine + ATP = L-leucyl-tRNA(Leu) + AMP + diphosphate. The protein is Leucine--tRNA ligase of Brucella melitensis biotype 2 (strain ATCC 23457).